Consider the following 403-residue polypeptide: Imidazolonepropionase (403 aa).

His-68 and His-70 together coordinate Fe(3+). Zn(2+)-binding residues include His-68 and His-70. Residues Arg-77, Tyr-140, and His-173 each coordinate 4-imidazolone-5-propanoate. Tyr-140 serves as a coordination point for N-formimidoyl-L-glutamate. His-238 is a Fe(3+) binding site. His-238 contributes to the Zn(2+) binding site. Residue Gln-241 participates in 4-imidazolone-5-propanoate binding. Fe(3+) is bound at residue Asp-313. Residue Asp-313 participates in Zn(2+) binding. 2 residues coordinate N-formimidoyl-L-glutamate: Asn-315 and Gly-317. Ser-318 is a binding site for 4-imidazolone-5-propanoate.

This sequence belongs to the metallo-dependent hydrolases superfamily. HutI family. It depends on Zn(2+) as a cofactor. Requires Fe(3+) as cofactor.

Its subcellular location is the cytoplasm. It catalyses the reaction 4-imidazolone-5-propanoate + H2O = N-formimidoyl-L-glutamate. Its pathway is amino-acid degradation; L-histidine degradation into L-glutamate; N-formimidoyl-L-glutamate from L-histidine: step 3/3. In terms of biological role, catalyzes the hydrolytic cleavage of the carbon-nitrogen bond in imidazolone-5-propanoate to yield N-formimidoyl-L-glutamate. It is the third step in the universal histidine degradation pathway. This Hahella chejuensis (strain KCTC 2396) protein is Imidazolonepropionase.